Consider the following 420-residue polypeptide: Glutamyl-tRNA reductase (420 aa).

Substrate contacts are provided by residues 49-52 (TCNR), serine 107, 112-114 (EPQ), and glutamine 118. The active-site Nucleophile is cysteine 50. An NADP(+)-binding site is contributed by 187–192 (GAGETI).

This sequence belongs to the glutamyl-tRNA reductase family. As to quaternary structure, homodimer.

It catalyses the reaction (S)-4-amino-5-oxopentanoate + tRNA(Glu) + NADP(+) = L-glutamyl-tRNA(Glu) + NADPH + H(+). Its pathway is porphyrin-containing compound metabolism; protoporphyrin-IX biosynthesis; 5-aminolevulinate from L-glutamyl-tRNA(Glu): step 1/2. Catalyzes the NADPH-dependent reduction of glutamyl-tRNA(Glu) to glutamate 1-semialdehyde (GSA). The sequence is that of Glutamyl-tRNA reductase from Photobacterium profundum (strain SS9).